A 241-amino-acid chain; its full sequence is MATVSMRDMLKAGVHFGHQTRYWNPKMKPFIFGARNKVHIINLEKTVPMFNDALAELSKIASRKGKILFVGTKRAASEAVKDAANNCDQFFVNHRWLGGMLTNWKTVRQSIKRLKDLETQSQDGTFDKLTKKEALMRTRELDKLENSLGGIKDMGGLPDALFVIDADHEHIAIKEANNLGIPVFAVVDTNSDPDGVDYIIPGNDDAIRAVSLYLSAVATAVREGRSQDLAVQAEEGLVEAE.

It belongs to the universal ribosomal protein uS2 family.

This chain is Small ribosomal subunit protein uS2, found in Pectobacterium carotovorum subsp. carotovorum (strain PC1).